Consider the following 242-residue polypeptide: Segregation and condensation protein A (242 aa).

This sequence belongs to the ScpA family. As to quaternary structure, component of a cohesin-like complex composed of ScpA, ScpB and the Smc homodimer, in which ScpA and ScpB bind to the head domain of Smc. The presence of the three proteins is required for the association of the complex with DNA.

Its subcellular location is the cytoplasm. Participates in chromosomal partition during cell division. May act via the formation of a condensin-like complex containing Smc and ScpB that pull DNA away from mid-cell into both cell halves. This is Segregation and condensation protein A from Lactococcus lactis subsp. cremoris (strain SK11).